A 201-amino-acid chain; its full sequence is Pyridoxal 5'-phosphate synthase subunit PdxT (201 aa).

L-glutamine is bound at residue 49-51 (GES). The active-site Nucleophile is the Cys81. L-glutamine contacts are provided by residues Arg110 and 139–140 (IR). Active-site charge relay system residues include His180 and Glu182.

Belongs to the glutaminase PdxT/SNO family. As to quaternary structure, in the presence of PdxS, forms a dodecamer of heterodimers. Only shows activity in the heterodimer.

The catalysed reaction is aldehydo-D-ribose 5-phosphate + D-glyceraldehyde 3-phosphate + L-glutamine = pyridoxal 5'-phosphate + L-glutamate + phosphate + 3 H2O + H(+). It carries out the reaction L-glutamine + H2O = L-glutamate + NH4(+). It functions in the pathway cofactor biosynthesis; pyridoxal 5'-phosphate biosynthesis. In terms of biological role, catalyzes the hydrolysis of glutamine to glutamate and ammonia as part of the biosynthesis of pyridoxal 5'-phosphate. The resulting ammonia molecule is channeled to the active site of PdxS. The sequence is that of Pyridoxal 5'-phosphate synthase subunit PdxT from Salinispora arenicola (strain CNS-205).